The following is a 530-amino-acid chain: Asc-type amino acid transporter 1 (530 aa).

Residues 1-36 (MRRDSDMASHIQQPGGHGNPGPAPSPSPGPGPGPGA) are disordered. The segment covering 21–33 (GPAPSPSPGPGPG) has biased composition (pro residues). Helical transmembrane passes span 46–66 (IGLVSACTIIIGNIIGSGIFI), 78–98 (VGLALFVWVLGGGVTALGSLC), 119–139 (IFGGLAGFLLLWSAVLIMYPT), 192–212 (IQVIFTGGKLLALSLIITVGF), 274–294 (AIFISIPLVTFVYTFTNVAYF), 316–336 (LLGYFSWVMPVSVALSTFGGI), 368–388 (CTPIPALLVCCGATAVIMLVG), 394–414 (INYVSFINYLCYGVTILGLLV), 430–450 (LLVPVVYLVFWAFLLVFSFIS), and 454–474 (VCGVGIIIILTGVPIFFLGVF). The tract at residues 508–530 (EEENGPMGQPSPLPITDKPLKTQ) is disordered.

This sequence belongs to the amino acid-polyamine-organocation (APC) superfamily. Disulfide-linked heterodimer with the amino acid transport protein SLC3A2/4F2hc.

Its subcellular location is the cell membrane. It carries out the reaction L-alanine(in) + glycine(out) = L-alanine(out) + glycine(in). It catalyses the reaction L-serine(out) + L-alanine(in) = L-serine(in) + L-alanine(out). The catalysed reaction is L-threonine(out) + L-alanine(in) = L-threonine(in) + L-alanine(out). The enzyme catalyses L-cysteine(out) + L-alanine(in) = L-cysteine(in) + L-alanine(out). It carries out the reaction 2-aminoisobutanoate(out) + L-alanine(in) = 2-aminoisobutanoate(in) + L-alanine(out). It catalyses the reaction D-serine(out) + L-alanine(in) = D-serine(in) + L-alanine(out). The catalysed reaction is D-alanine(out) + L-alanine(in) = D-alanine(in) + L-alanine(out). The enzyme catalyses L-valine(out) + L-alanine(in) = L-valine(in) + L-alanine(out). It carries out the reaction L-methionine(out) + L-alanine(in) = L-methionine(in) + L-alanine(out). It catalyses the reaction beta-alanine(out) + L-alanine(in) = beta-alanine(in) + L-alanine(out). The catalysed reaction is D-cysteine(out) + L-alanine(in) = D-cysteine(in) + L-alanine(out). The enzyme catalyses D-threonine(out) + L-alanine(in) = D-threonine(in) + L-alanine(out). It carries out the reaction D-isoleucine(out) + D-serine(in) = D-isoleucine(in) + D-serine(out). It catalyses the reaction D-serine(in) = D-serine(out). In terms of biological role, associates with SLC3A2/4F2hc to form a functional heterodimeric complex that translocates small neutral L- and D-amino acids across the plasma membrane. Preferentially mediates exchange transport, but can also operate via facilitated diffusion. Acts as a major transporter for glycine, L- and D-serine in the central nervous system. At the spinal cord and brainstem regulates glycine metabolism and glycinergic inhibitory neurotransmission by providing for glycine de novo synthesis from L-serine and glycine recycling from astrocytes to glycinergic motor neurons. At Schaffer collateral-CA1 synapses mediates D-serine and glycine release that modulates post-synaptic activation of NMDA receptors and excitatory glutamatergic transmission. May regulate D-serine release from mesenchymal progenitors located in developing subcutaneous adipose tissue, favoring white adipocyte over thermogenic beige adipocyte lineage commitment. This chain is Asc-type amino acid transporter 1 (Slc7a10), found in Rattus norvegicus (Rat).